The primary structure comprises 227 residues: Cytochrome c oxidase subunit 2 (227 aa).

The Mitochondrial intermembrane portion of the chain corresponds to 1-26 (MATWSNLSLQDGASPLMEQLSFFHDH). A helical membrane pass occupies residues 27 to 48 (TMIDLLLITMIVGYSLSYMLLT). The Mitochondrial matrix portion of the chain corresponds to 49–62 (KYTNRNMLHGHLIE). The chain crosses the membrane as a helical span at residues 63-82 (TIWTALPAITLIFIALPSLR). The Mitochondrial intermembrane portion of the chain corresponds to 83–227 (LLYLLDDSSD…LFIKWLSNMM (145 aa)). Residues H161, C196, E198, C200, H204, and M207 each contribute to the Cu cation site. Mg(2+) is bound at residue E198.

This sequence belongs to the cytochrome c oxidase subunit 2 family. As to quaternary structure, component of the cytochrome c oxidase (complex IV, CIV), a multisubunit enzyme composed of a catalytic core of 3 subunits and several supernumerary subunits. The complex exists as a monomer or a dimer and forms supercomplexes (SCs) in the inner mitochondrial membrane with ubiquinol-cytochrome c oxidoreductase (cytochrome b-c1 complex, complex III, CIII). The cofactor is Cu cation.

The protein resides in the mitochondrion inner membrane. It carries out the reaction 4 Fe(II)-[cytochrome c] + O2 + 8 H(+)(in) = 4 Fe(III)-[cytochrome c] + 2 H2O + 4 H(+)(out). In terms of biological role, component of the cytochrome c oxidase, the last enzyme in the mitochondrial electron transport chain which drives oxidative phosphorylation. The respiratory chain contains 3 multisubunit complexes succinate dehydrogenase (complex II, CII), ubiquinol-cytochrome c oxidoreductase (cytochrome b-c1 complex, complex III, CIII) and cytochrome c oxidase (complex IV, CIV), that cooperate to transfer electrons derived from NADH and succinate to molecular oxygen, creating an electrochemical gradient over the inner membrane that drives transmembrane transport and the ATP synthase. Cytochrome c oxidase is the component of the respiratory chain that catalyzes the reduction of oxygen to water. Electrons originating from reduced cytochrome c in the intermembrane space (IMS) are transferred via the dinuclear copper A center (CU(A)) of subunit 2 and heme A of subunit 1 to the active site in subunit 1, a binuclear center (BNC) formed by heme A3 and copper B (CU(B)). The BNC reduces molecular oxygen to 2 water molecules using 4 electrons from cytochrome c in the IMS and 4 protons from the mitochondrial matrix. The polypeptide is Cytochrome c oxidase subunit 2 (COII) (Locusta migratoria (Migratory locust)).